The following is a 152-amino-acid chain: Superoxide dismutase [Cu-Zn] (152 aa).

3 residues coordinate Cu cation: H45, H47, and H62. The cysteines at positions 56 and 145 are disulfide-linked. Positions 62, 70, 79, and 82 each coordinate Zn(2+). H119 provides a ligand contact to Cu cation.

It belongs to the Cu-Zn superoxide dismutase family. Homodimer. The cofactor is Cu cation. Requires Zn(2+) as cofactor.

The protein localises to the cytoplasm. It carries out the reaction 2 superoxide + 2 H(+) = H2O2 + O2. In terms of biological role, destroys radicals which are normally produced within the cells and which are toxic to biological systems. The polypeptide is Superoxide dismutase [Cu-Zn] (SODCC) (Nicotiana plumbaginifolia (Leadwort-leaved tobacco)).